The chain runs to 254 residues: MRERMVTWAAVFQRNAMSWRREMAASVLGSVIDPLIMLFGLGVGLGKIVDSVDGRSYAEFLACGLILTSAMSASNYEMLYGTYSRIYVTGTLKSMRYAPICVSDYLIGEVLWAAYEGVVAGTIVAVCTAFLGYIPGWSVIYILPDILFVALIFSSTSLLVAAISRGYALFAFYQSIAIAPLVFLSGVIVPRFTGNDVISGMIHFSPLYRAVNDVRNVVYEGRGTQVGPLLLLSLLYASVMVFISAKVICVRLDD.

The next 6 membrane-spanning stretches (helical) occupy residues 25–45 (ASVL…GVGL), 60–80 (FLAC…EMLY), 106–126 (LIGE…IVAV), 133–153 (YIPG…ALIF), 169–189 (LFAF…GVIV), and 230–250 (LLLS…VICV). The 227-residue stretch at 25–251 (ASVLGSVIDP…FISAKVICVR (227 aa)) folds into the ABC transmembrane type-2 domain.

Belongs to the ABC-2 integral membrane protein family. Lipooligosaccharide exporter (TC 3.A.1.102) subfamily. As to quaternary structure, the complex is composed of two ATP-binding proteins (NodI) and two transmembrane proteins (NodJ).

Its subcellular location is the cell inner membrane. Its function is as follows. Part of the ABC transporter complex NodIJ involved in the export of the nodulation factors (Nod factors), the bacterial signal molecules that induce symbiosis and subsequent nodulation induction. Nod factors are LCO (lipo-chitin oligosaccharide), a modified beta-1,4-linked N-acetylglucosamine oligosaccharide. This subunit encodes the transporter. The protein is Nodulation protein J (nodJ) of Azorhizobium caulinodans (strain ATCC 43989 / DSM 5975 / JCM 20966 / LMG 6465 / NBRC 14845 / NCIMB 13405 / ORS 571).